An 837-amino-acid polypeptide reads, in one-letter code: Autophagy-related protein 13 (837 aa).

Residues 302–336 (LKIDRDSTTNEKVNEPEDDESHHADVESSQEHLQS) show a composition bias toward basic and acidic residues. Disordered regions lie at residues 302 to 400 (LKID…QRPT), 446 to 540 (RNPR…MNDT), 631 to 704 (QLSG…TNSN), and 793 to 837 (ANAP…LAKH). The span at 358 to 400 (SISNNASMSLSPCSSGPQTVTEDSPSHNKPSANTTPIVSQRPT) shows a compositional bias: polar residues. Low complexity predominate over residues 450–475 (SSTSSTNTTANIPIANNNSNNQYNST). Residues 476-486 (FPRSVSSSHGS) are compositionally biased toward polar residues. Residues 509 to 523 (RFSSSFGSRASRRFS) are compositionally biased toward low complexity. Composition is skewed to polar residues over residues 524–538 (NTSGRQSSLPSGNMN), 658–680 (YDNSHLPSINSKLRENSSTSGND), 688–704 (GTPSSRKNSFDYSTNSN), and 796–812 (PKSNTNSRSLKSSTNPP). Residues 815-825 (GEDDDDDDDDL) show a composition bias toward acidic residues.

This sequence belongs to the ATG13 family. Fungi subfamily. As to quaternary structure, interacts with ATG1 to form the ATG1-ATG13 kinase complex.

The protein localises to the cytoplasm. The protein resides in the preautophagosomal structure. Functionally, activates the ATG1 kinase in a nutritional condition dependent manner through the TOR pathway, leading to autophagy. Also involved in cytoplasm to vacuole transport (Cvt) and more specifically in Cvt vesicle formation. Seems to play a role in the switching machinery regulating the conversion between the Cvt pathway and autophagy. Finally, ATG13 is also required for glycogen storage during stationary phase. The protein is Autophagy-related protein 13 (ATG13) of Debaryomyces hansenii (strain ATCC 36239 / CBS 767 / BCRC 21394 / JCM 1990 / NBRC 0083 / IGC 2968) (Yeast).